The primary structure comprises 126 residues: Large ribosomal subunit protein bL12 (126 aa).

This sequence belongs to the bacterial ribosomal protein bL12 family. In terms of assembly, homodimer. Part of the ribosomal stalk of the 50S ribosomal subunit. Forms a multimeric L10(L12)X complex, where L10 forms an elongated spine to which 2 to 4 L12 dimers bind in a sequential fashion. Binds GTP-bound translation factors.

Its function is as follows. Forms part of the ribosomal stalk which helps the ribosome interact with GTP-bound translation factors. Is thus essential for accurate translation. This Beijerinckia indica subsp. indica (strain ATCC 9039 / DSM 1715 / NCIMB 8712) protein is Large ribosomal subunit protein bL12.